Here is a 284-residue protein sequence, read N- to C-terminus: MLIIETLPLLRQHIRRLRQEGKRVALVPTMGNLHDGHMKLVDEAKARADVVIVSIFVNPMQFDRPDDLVRYPRTLQEDCEKLNKRKVDYVFAPAVEEIYPQGLEGQTYVDVPGLSTMLEGASRPGHFRGVSTIVSKLFNLIQPDIACFGEKDFQQLALIRKMVADMSYDIEIVGVPIIRAKDGLALSSRNAYLTAEQRKIAPGLYNVMNSIAEKLIAGNRELQEIIAIAEQELNEKGFRADDIQIRDADTLQELTETSKRAVILAAAWLGQARLIDNQSVTLAQ.

30–37 (MGNLHDGH) contacts ATP. The active-site Proton donor is the histidine 37. (R)-pantoate is bound at residue glutamine 61. Position 61 (glutamine 61) interacts with beta-alanine. 149–152 (GEKD) serves as a coordination point for ATP. Residue glutamine 155 coordinates (R)-pantoate. ATP contacts are provided by residues isoleucine 178 and 186–189 (LSSR).

This sequence belongs to the pantothenate synthetase family. Homodimer.

It localises to the cytoplasm. The enzyme catalyses (R)-pantoate + beta-alanine + ATP = (R)-pantothenate + AMP + diphosphate + H(+). The protein operates within cofactor biosynthesis; (R)-pantothenate biosynthesis; (R)-pantothenate from (R)-pantoate and beta-alanine: step 1/1. Functionally, catalyzes the condensation of pantoate with beta-alanine in an ATP-dependent reaction via a pantoyl-adenylate intermediate. This Salmonella choleraesuis (strain SC-B67) protein is Pantothenate synthetase.